The sequence spans 361 residues: UDP-3-O-acylglucosamine N-acyltransferase (361 aa).

Catalysis depends on His253, which acts as the Proton acceptor.

The protein belongs to the transferase hexapeptide repeat family. LpxD subfamily. In terms of assembly, homotrimer.

It catalyses the reaction a UDP-3-O-[(3R)-3-hydroxyacyl]-alpha-D-glucosamine + a (3R)-hydroxyacyl-[ACP] = a UDP-2-N,3-O-bis[(3R)-3-hydroxyacyl]-alpha-D-glucosamine + holo-[ACP] + H(+). The protein operates within bacterial outer membrane biogenesis; LPS lipid A biosynthesis. Its function is as follows. Catalyzes the N-acylation of UDP-3-O-acylglucosamine using 3-hydroxyacyl-ACP as the acyl donor. Is involved in the biosynthesis of lipid A, a phosphorylated glycolipid that anchors the lipopolysaccharide to the outer membrane of the cell. The chain is UDP-3-O-acylglucosamine N-acyltransferase from Burkholderia mallei (strain ATCC 23344).